We begin with the raw amino-acid sequence, 347 residues long: Phenylalanine--tRNA ligase alpha subunit (347 aa).

Glu-262 is a binding site for Mg(2+).

Belongs to the class-II aminoacyl-tRNA synthetase family. Phe-tRNA synthetase alpha subunit type 1 subfamily. Tetramer of two alpha and two beta subunits. It depends on Mg(2+) as a cofactor.

Its subcellular location is the cytoplasm. The catalysed reaction is tRNA(Phe) + L-phenylalanine + ATP = L-phenylalanyl-tRNA(Phe) + AMP + diphosphate + H(+). This Roseiflexus castenholzii (strain DSM 13941 / HLO8) protein is Phenylalanine--tRNA ligase alpha subunit.